The primary structure comprises 379 residues: DNA replication and repair protein RecF (379 aa).

Glycine 30–threonine 37 lines the ATP pocket.

It belongs to the RecF family.

Its subcellular location is the cytoplasm. The RecF protein is involved in DNA metabolism; it is required for DNA replication and normal SOS inducibility. RecF binds preferentially to single-stranded, linear DNA. It also seems to bind ATP. This is DNA replication and repair protein RecF from Ligilactobacillus salivarius (strain UCC118) (Lactobacillus salivarius).